Reading from the N-terminus, the 70-residue chain is Putative microRNA 17 host gene protein (70 aa).

Residues 1–20 (MFCHVDVKISSKRYTWTKLP) are Cytoplasmic-facing. Residues 21 to 43 (LNVPKLVLIYLQSHFVLFFFSMC) form a helical membrane-spanning segment. Topologically, residues 44-70 (QSIWERPAIGRATTSSASWMVGYDCLL) are extracellular.

As to expression, highly expressed in B-cell lymphoma and lung cancer.

It localises to the membrane. This Homo sapiens (Human) protein is Putative microRNA 17 host gene protein (MIR17HG).